The chain runs to 177 residues: Large ribosomal subunit protein uL6 (177 aa).

Belongs to the universal ribosomal protein uL6 family. In terms of assembly, part of the 50S ribosomal subunit.

Its function is as follows. This protein binds to the 23S rRNA, and is important in its secondary structure. It is located near the subunit interface in the base of the L7/L12 stalk, and near the tRNA binding site of the peptidyltransferase center. This is Large ribosomal subunit protein uL6 from Methanothermobacter thermautotrophicus (strain ATCC 29096 / DSM 1053 / JCM 10044 / NBRC 100330 / Delta H) (Methanobacterium thermoautotrophicum).